The chain runs to 84 residues: Three-finger toxin 3FTx-1 (84 aa).

An N-terminal signal peptide occupies residues 1–21; the sequence is MKTLLLTLVVVTIVCLDLGNS. Cystine bridges form between Cys-24/Cys-41, Cys-34/Cys-59, Cys-63/Cys-71, and Cys-72/Cys-77. An N-linked (GlcNAc...) asparagine glycan is attached at Asn-78.

Belongs to the three-finger toxin family. Short-chain subfamily. In terms of tissue distribution, expressed by the venom gland.

The protein resides in the secreted. In Micrurus corallinus (Brazilian coral snake), this protein is Three-finger toxin 3FTx-1.